Consider the following 108-residue polypeptide: UPF0060 membrane protein Mvan_3406 (108 aa).

4 helical membrane passes run 7–27 (LLFV…WQGV), 32–52 (GLTW…VAAF), 61–81 (VLAA…VVAD), and 87–107 (RWDI…MYAP).

This sequence belongs to the UPF0060 family.

The protein localises to the cell membrane. In Mycolicibacterium vanbaalenii (strain DSM 7251 / JCM 13017 / BCRC 16820 / KCTC 9966 / NRRL B-24157 / PYR-1) (Mycobacterium vanbaalenii), this protein is UPF0060 membrane protein Mvan_3406.